We begin with the raw amino-acid sequence, 434 residues long: Enolase (434 aa).

Glutamine 165 is a (2R)-2-phosphoglycerate binding site. Glutamate 207 acts as the Proton donor in catalysis. Mg(2+) contacts are provided by aspartate 244, glutamate 291, and aspartate 318. Residues lysine 343, arginine 372, serine 373, and lysine 394 each coordinate (2R)-2-phosphoglycerate. Lysine 343 (proton acceptor) is an active-site residue.

The protein belongs to the enolase family. Requires Mg(2+) as cofactor.

It is found in the cytoplasm. It localises to the secreted. The protein resides in the cell surface. The catalysed reaction is (2R)-2-phosphoglycerate = phosphoenolpyruvate + H2O. It functions in the pathway carbohydrate degradation; glycolysis; pyruvate from D-glyceraldehyde 3-phosphate: step 4/5. In terms of biological role, catalyzes the reversible conversion of 2-phosphoglycerate (2-PG) into phosphoenolpyruvate (PEP). It is essential for the degradation of carbohydrates via glycolysis. The sequence is that of Enolase from Staphylococcus aureus (strain USA300 / TCH1516).